The chain runs to 147 residues: Hemoglobin subunit epsilon (147 aa).

Residues 3 to 147 (HFTAEEKVAI…VAIALGHKYH (145 aa)) enclose the Globin domain. Phosphoserine is present on residues Ser14 and Ser51. Residues His64 and His93 each contribute to the heme b site.

This sequence belongs to the globin family. As to quaternary structure, heterotetramer of two alpha chains and two epsilon chains in early embryonic hemoglobin Gower-2; two zeta chains and two epsilon chains in early embryonic hemoglobin Gower-1. Red blood cells.

In terms of biological role, the epsilon chain is a beta-type chain of early mammalian embryonic hemoglobin. In Cebus kaapori (Ka'apor capuchin), this protein is Hemoglobin subunit epsilon (HBE1).